The sequence spans 1060 residues: MPKRTDIRKIMVIGSGPIVIGQAAEFDYSGTQACLSLKEEGYQVVLVNSNPATIMTDKDIADKVYIEPITLEFVTRILRKERPDALLPTLGGQTGLNMAMALSKNGILEELNVELLGTKLSAIDKAEDRDLFKQLMEELNQPIPESEIVNSVEEAIQFAEQIGYPLIVRPAFTLGGTGGGMCDNQEQLVDITTKGLKLSPVTQCLIERSIAGFKEIEYEVMRDAADNALVVCNMENFDPVGIHTGDSIVFAPAQTLSDVENQLLRDASLDIIRALKIEGGCNVQLALDPNSFKYYVIEVNPRVSRSSALASKATGYPIAKLAAKIAVGLTLDEVINPITKTTYAMFEPALDYVVAKMPRFPFDKFESGDRKLGTQMKATGEVMAIGRNIEESLLKACRSLEIGVDHIKIADLDNVSDDVLLEKIRKAEDDRLFYLAEALRRHYSIEKLASLTSIDSFFLDKLRVIVELEDLLSKNRLDINILKKVKNKGFSDKAIASLWQINEDQVRNMRKEAGILPVYKMVDTCAAEFDSATPYFYSTYAVENESLISDKASILVLGSGPIRIGQGVEFDYATVHSVKAIRESGFEAIIMNSNPETVSTDFSISDKLYFEPLTFEDVMNVIDLEKPEGVILQFGGQTAINLAKDLNKAGVKILGTQLEDLDRAENRKQFEATLQALNIPQPPGFTATTEEEAVNAAQKIGYPVLVRPSYVLGGRAMKIVENEEDLRHYMTTAVKASPDHPVLIDAYLIGKECEVDAISDGQNILIPGIMEHIERAGVHSGDSMAVYPPQTLSETIIETIVDYTKRLAIGLNCIGMMNIQFVIKDQKVYVIEVNPRASRTLPFLSKVTHIPMAQVATKVILGDKLCNFTYGYDLYPASDMVHIKAPVFSFTKLAKVDSLLGPEMKSTGEVMGSDINLQKALYKAFEAAYLHMPDYGNIVFTVDDTDKEEALELAKVYQSIGYRIYATQGTAIYFDANGLETVLVGKLGENDRNHIPDLIKNGKIQAVINTVGQNNIDNHDALIIRRSAIEQGVPLFTSLDTAHAMFKVLESRAFTLKVLD.

The carboxyphosphate synthetic domain stretch occupies residues 1-401 (MPKRTDIRKI…SLLKACRSLE (401 aa)). Residues R129, R169, G175, G176, R208, I210, E215, G241, I242, H243, Q284, and E298 each contribute to the ATP site. The ATP-grasp 1 domain maps to 133-327 (KQLMEELNQP…IAKLAAKIAV (195 aa)). Q284, E298, and N300 together coordinate Mg(2+). Positions 284, 298, and 300 each coordinate Mn(2+). The segment at 402–546 (IGVDHIKIAD…YSTYAVENES (145 aa)) is oligomerization domain. The segment at 547–929 (LISDKASILV…ALYKAFEAAY (383 aa)) is carbamoyl phosphate synthetic domain. Positions 671–861 (EATLQALNIP…MAQVATKVIL (191 aa)) constitute an ATP-grasp 2 domain. The ATP site is built by R707, A746, L748, E752, G777, V778, H779, S780, Q820, and E832. The Mg(2+) site is built by Q820, E832, and N834. Positions 820, 832, and 834 each coordinate Mn(2+). Positions 930-1060 (LHMPDYGNIV…SRAFTLKVLD (131 aa)) constitute an MGS-like domain. The interval 930–1060 (LHMPDYGNIV…SRAFTLKVLD (131 aa)) is allosteric domain.

The protein belongs to the CarB family. In terms of assembly, composed of two chains; the small (or glutamine) chain promotes the hydrolysis of glutamine to ammonia, which is used by the large (or ammonia) chain to synthesize carbamoyl phosphate. Tetramer of heterodimers (alpha,beta)4. It depends on Mg(2+) as a cofactor. Requires Mn(2+) as cofactor.

It carries out the reaction hydrogencarbonate + L-glutamine + 2 ATP + H2O = carbamoyl phosphate + L-glutamate + 2 ADP + phosphate + 2 H(+). It catalyses the reaction hydrogencarbonate + NH4(+) + 2 ATP = carbamoyl phosphate + 2 ADP + phosphate + 2 H(+). It participates in amino-acid biosynthesis; L-arginine biosynthesis; carbamoyl phosphate from bicarbonate: step 1/1. The protein operates within pyrimidine metabolism; UMP biosynthesis via de novo pathway; (S)-dihydroorotate from bicarbonate: step 1/3. In terms of biological role, large subunit of the glutamine-dependent carbamoyl phosphate synthetase (CPSase). CPSase catalyzes the formation of carbamoyl phosphate from the ammonia moiety of glutamine, carbonate, and phosphate donated by ATP, constituting the first step of 2 biosynthetic pathways, one leading to arginine and/or urea and the other to pyrimidine nucleotides. The large subunit (synthetase) binds the substrates ammonia (free or transferred from glutamine from the small subunit), hydrogencarbonate and ATP and carries out an ATP-coupled ligase reaction, activating hydrogencarbonate by forming carboxy phosphate which reacts with ammonia to form carbamoyl phosphate. The polypeptide is Carbamoyl phosphate synthase large chain (Streptococcus agalactiae serotype Ia (strain ATCC 27591 / A909 / CDC SS700)).